A 1324-amino-acid polypeptide reads, in one-letter code: Sal-like protein 1 (1324 aa).

The segment at M1–A42 is disordered. Basic and acidic residues predominate over residues P22–A42. The C2H2-type 1; atypical zinc finger occupies H43 to C65. Disordered stretches follow at residues N77–V102, V108–V127, A132–I172, and P317–G336. The segment covering L113–S124 has biased composition (basic and acidic residues). Residues S135 to S158 are compositionally biased toward low complexity. Polar residues predominate over residues L321–G336. A Glycyl lysine isopeptide (Lys-Gly) (interchain with G-Cter in SUMO2) cross-link involves residue K439. C2H2-type zinc fingers lie at residues H449–H471 and F477–H499. Residues P577 to A646 form a disordered region. S590, S593, and S595 each carry phosphoserine. Low complexity predominate over residues S633–A646. Glycyl lysine isopeptide (Lys-Gly) (interchain with G-Cter in SUMO2) cross-links involve residues K673, K690, and K701. C2H2-type zinc fingers lie at residues N706–H728, F734–H756, and H766–H788. 2 disordered regions span residues G790–L856 and E894–T963. Residues Y802–G811 show a composition bias toward polar residues. Over residues D820–P833 the composition is skewed to acidic residues. The segment covering S843–L856 has biased composition (low complexity). Polar residues predominate over residues T899–Q936. Basic and acidic residues predominate over residues E937–Q949. Residues S941 and S943 each carry the phosphoserine modification. Residues K947 and K982 each participate in a glycyl lysine isopeptide (Lys-Gly) (interchain with G-Cter in SUMO2) cross-link. 2 C2H2-type zinc fingers span residues T1001–H1023 and F1029–H1051. K1086 is covalently cross-linked (Glycyl lysine isopeptide (Lys-Gly) (interchain with G-Cter in SUMO2)). Residues V1095–P1120 are disordered. Polar residues predominate over residues T1105–S1119. C2H2-type zinc fingers lie at residues H1134–H1156 and F1162–H1184. Residues K1219, K1299, and K1319 each participate in a glycyl lysine isopeptide (Lys-Gly) (interchain with G-Cter in SUMO2) cross-link.

Belongs to the sal C2H2-type zinc-finger protein family. As to quaternary structure, may associate with NuRD histone deacetylase complex (HDAC). Interacts with components of HDAC complex including HDAC1, HDAC2, RBBP4, RBPP7, MTA1 and MTA2. Interacts with CCNQ. Interacts with NSD2 (via PHD-type zinc fingers 1, 2 and 3). In terms of tissue distribution, highest levels in kidney. Lower levels in adult brain (enriched in corpus callosum, lower expression in substantia nigra) and liver.

The protein localises to the nucleus. Transcriptional repressor involved in organogenesis. Plays an essential role in ureteric bud invasion during kidney development. In Homo sapiens (Human), this protein is Sal-like protein 1 (SALL1).